Here is a 104-residue protein sequence, read N- to C-terminus: MVELDGKFATKADLKRVEDKVDVLFELQKTQGEQIKVQGKQIEQLTETVQKQGEQIKELQVQVKAQGEEIKEIKVEQKAQGQTLQLILKALEGINKRLDNLESK.

This sequence belongs to the UPF0134 family.

The protein is UPF0134 protein MPN_104 of Mycoplasma pneumoniae (strain ATCC 29342 / M129 / Subtype 1) (Mycoplasmoides pneumoniae).